A 246-amino-acid polypeptide reads, in one-letter code: 4-hydroxy-tetrahydrodipicolinate reductase (246 aa).

Residues 8 to 13, 74 to 76, and 101 to 104 each bind NAD(+); these read GAKGRM, GTT, and APNF. His-131 serves as the catalytic Proton donor/acceptor. His-132 is a binding site for (S)-2,3,4,5-tetrahydrodipicolinate. Lys-135 (proton donor) is an active-site residue. 141–142 provides a ligand contact to (S)-2,3,4,5-tetrahydrodipicolinate; sequence GT.

This sequence belongs to the DapB family.

It localises to the cytoplasm. It catalyses the reaction (S)-2,3,4,5-tetrahydrodipicolinate + NAD(+) + H2O = (2S,4S)-4-hydroxy-2,3,4,5-tetrahydrodipicolinate + NADH + H(+). The enzyme catalyses (S)-2,3,4,5-tetrahydrodipicolinate + NADP(+) + H2O = (2S,4S)-4-hydroxy-2,3,4,5-tetrahydrodipicolinate + NADPH + H(+). Its pathway is amino-acid biosynthesis; L-lysine biosynthesis via DAP pathway; (S)-tetrahydrodipicolinate from L-aspartate: step 4/4. Catalyzes the conversion of 4-hydroxy-tetrahydrodipicolinate (HTPA) to tetrahydrodipicolinate. The polypeptide is 4-hydroxy-tetrahydrodipicolinate reductase (Cutibacterium acnes (strain DSM 16379 / KPA171202) (Propionibacterium acnes)).